Here is a 321-residue protein sequence, read N- to C-terminus: Protein FAM110C (321 aa).

Disordered stretches follow at residues 1-84 and 111-203; these read MRAL…APAP and RGSG…SQSD. 2 stretches are compositionally biased toward basic and acidic residues: residues 15–46 and 131–145; these read LLPRDPAATRDPDAARPARRSAVERLAADRAK and GKDKAPVPRTGDEGK. Residues 169-181 are compositionally biased toward low complexity; the sequence is APAARSAAPSSVP. Position 241 is a phosphoserine (serine 241).

This sequence belongs to the FAM110 family. In terms of assembly, interacts with AKT1; the interaction is transient and follows AKT1 activation. Interacts with PPP2CA and alpha-tubulin. Detected in stomach, thyroid, trachea, adrenal gland and testis, and at low levels in prostate, ovary, intestine, colon, spinal cord and lymph node.

The protein localises to the cytoplasm. It is found in the cytoskeleton. The protein resides in the microtubule organizing center. It localises to the centrosome. Its subcellular location is the spindle pole. The protein localises to the nucleus. In terms of biological role, may play a role in microtubule organization. May play a role in cell spreading and cell migration of epithelial cells; the function may involve the AKT1 signaling pathway. The polypeptide is Protein FAM110C (FAM110C) (Homo sapiens (Human)).